The primary structure comprises 798 residues: Protocadherin beta-13 (798 aa).

The first 28 residues, 1 to 28, serve as a signal peptide directing secretion; that stretch reads MEASGKLICRQRQVLFSFLLLGLSLAGA. Over 29–690 the chain is Extracellular; that stretch reads AEPRSYSVVE…AQADSLTVYL (662 aa). Cadherin domains follow at residues 36-134, 139-243, 248-348, 353-451, and 456-561; these read VVEE…SPVF, MLVK…APEF, YRVQ…APEV, FTSP…APAF, and YTLF…SPFV. Asn418 and Asn436 each carry an N-linked (GlcNAc...) asparagine glycan. An N-linked (GlcNAc...) asparagine glycan is attached at Asn567. The Cadherin 6 domain maps to 568 to 671; that stretch reads GSAPCTELVP…LVDGFSQPYL (104 aa). Residues 691-711 traverse the membrane as a helical segment; it reads VVALASVSSLFLFSVLLFVAV. The Cytoplasmic segment spans residues 712–798; sequence RLCRRSRAAS…FPNNFGFNIQ (87 aa).

It localises to the cell membrane. Functionally, potential calcium-dependent cell-adhesion protein. May be involved in the establishment and maintenance of specific neuronal connections in the brain. This Pan troglodytes (Chimpanzee) protein is Protocadherin beta-13 (PCDHB13).